The following is a 486-amino-acid chain: Cardiolipin synthase A (486 aa).

2 consecutive transmembrane segments (helical) span residues 3–23 (TFYTVISWLLVFSYWLLIAGV) and 38–58 (MAWLLVIYILPLVGIVAYLSF). 2 consecutive PLD phosphodiesterase domains span residues 219 to 246 (MDLRQHRKIILIDSRIAYTGSMNMVDPR) and 399 to 426 (KDGLLHTKSVLVDGQLSLVGTVNLDMRS). Catalysis depends on residues His-224, Lys-226, Asp-231, His-404, Lys-406, and Asp-411.

The protein belongs to the phospholipase D family. Cardiolipin synthase subfamily. ClsA sub-subfamily.

It localises to the cell inner membrane. The catalysed reaction is 2 a 1,2-diacyl-sn-glycero-3-phospho-(1'-sn-glycerol) = a cardiolipin + glycerol. Its function is as follows. Catalyzes the reversible phosphatidyl group transfer from one phosphatidylglycerol molecule to another to form cardiolipin (CL) (diphosphatidylglycerol) and glycerol. The polypeptide is Cardiolipin synthase A (Pectobacterium atrosepticum (strain SCRI 1043 / ATCC BAA-672) (Erwinia carotovora subsp. atroseptica)).